A 1040-amino-acid chain; its full sequence is ATPase family AAA domain-containing protein 2 (1040 aa).

A compositionally biased stretch (basic residues) spans Met1 to Ile11. Residues Met1–Arg30 form a disordered region. Residue Ser65 is modified to Phosphoserine. Gly122–Thr129 serves as a coordination point for ATP. Residues Ser401 and Ser406 each carry the phosphoserine modification. Coiled coils occupy residues Leu619–Arg643 and Tyr735–Gly761. Residues Glu629–Glu741 enclose the Bromo domain. A disordered region spans residues Tyr772–Pro799. Residues Lys777 and Lys797 each participate in a glycyl lysine isopeptide (Lys-Gly) (interchain with G-Cter in SUMO2) cross-link. Over residues Gly784–Lys797 the composition is skewed to basic and acidic residues. A phosphothreonine mark is found at Thr801 and Thr825. Residues Leu811–Ser833 show a composition bias toward basic residues. The interval Leu811–Ser935 is disordered. A compositionally biased stretch (polar residues) spans Ala835–Arg848. Phosphoserine occurs at positions 849, 883, and 891. 2 stretches are compositionally biased toward basic and acidic residues: residues Ser849–Glu863 and Glu874–Ile885. Residues Glu901–Cys919 are compositionally biased toward basic and acidic residues. Ser951 is subject to Phosphoserine. Thr972 is subject to Phosphothreonine.

The protein belongs to the AAA ATPase family. Interacts with ESR1 and NCOA3 and these interactions are enhanced by estradiol. Interacts with acetylated lysine residues on histone H1.4, H2A, H2B and H3 (in vitro).

The protein localises to the nucleus. The enzyme catalyses ATP + H2O = ADP + phosphate + H(+). Its function is as follows. May be a transcriptional coactivator of the nuclear receptor ESR1 required to induce the expression of a subset of estradiol target genes, such as CCND1, MYC and E2F1. May play a role in the recruitment or occupancy of CREBBP at some ESR1 target gene promoters. May be required for histone hyperacetylation. The sequence is that of ATPase family AAA domain-containing protein 2 (Atad2) from Mus musculus (Mouse).